The primary structure comprises 150 residues: MIAVIQRVRKASVEIADKEHASIAAGLLVLLGITHTDEELDVEWLSAKICSLRIFSDEAGKMNRSLSEINGELLVVSQFTLFASTKKGNRPSFIEAARPEQAIPLYEQFIAACEMQLNQKIKTGIFGADMQVALINDGPVTILIDSKNKQ.

The short motif at 138–139 (GP) is the Gly-cisPro motif, important for rejection of L-amino acids element.

It belongs to the DTD family. As to quaternary structure, homodimer.

Its subcellular location is the cytoplasm. It carries out the reaction glycyl-tRNA(Ala) + H2O = tRNA(Ala) + glycine + H(+). It catalyses the reaction a D-aminoacyl-tRNA + H2O = a tRNA + a D-alpha-amino acid + H(+). In terms of biological role, an aminoacyl-tRNA editing enzyme that deacylates mischarged D-aminoacyl-tRNAs. Also deacylates mischarged glycyl-tRNA(Ala), protecting cells against glycine mischarging by AlaRS. Acts via tRNA-based rather than protein-based catalysis; rejects L-amino acids rather than detecting D-amino acids in the active site. By recycling D-aminoacyl-tRNA to D-amino acids and free tRNA molecules, this enzyme counteracts the toxicity associated with the formation of D-aminoacyl-tRNA entities in vivo and helps enforce protein L-homochirality. The protein is D-aminoacyl-tRNA deacylase of Cytophaga hutchinsonii (strain ATCC 33406 / DSM 1761 / CIP 103989 / NBRC 15051 / NCIMB 9469 / D465).